Consider the following 151-residue polypeptide: Ubiquitin-conjugating enzyme E2 W (151 aa).

M1 participates in a covalent cross-link: Peptide (Met-Gly) (interchain with G-Cter in ubiquitin). Residues 3-151 form the UBC core domain; that stretch reads SMQKRLQKEL…TKWWYHDDTC (149 aa). C91 serves as the catalytic Glycyl thioester intermediate.

Belongs to the ubiquitin-conjugating enzyme family. As to quaternary structure, homodimer. Interacts with FANCL. Interacts with STUB1/CHIP. Autoubiquitinated at Met-1.

It localises to the nucleus. The catalysed reaction is S-ubiquitinyl-[E1 ubiquitin-activating enzyme]-L-cysteine + [E2 ubiquitin-conjugating enzyme]-L-cysteine = [E1 ubiquitin-activating enzyme]-L-cysteine + S-ubiquitinyl-[E2 ubiquitin-conjugating enzyme]-L-cysteine.. It catalyses the reaction S-ubiquitinyl-[E1 ubiquitin-activating enzyme]-L-cysteine + [acceptor protein]-N-terminal-amino acid = [E1 ubiquitin-activating enzyme]-L-cysteine + N-terminal-ubiquitinyl-[acceptor protein].. Its pathway is protein modification; protein ubiquitination. Accepts ubiquitin from the E1 complex and catalyzes its covalent attachment to other proteins. Specifically monoubiquitinates the N-terminus of various substrates, including ATXN3, MAPT/TAU, POLR2H/RPB8 and STUB1/CHIP, by recognizing backbone atoms of disordered N-termini. Involved in degradation of misfolded chaperone substrates by mediating monoubiquitination of STUB1/CHIP, leading to recruitment of ATXN3 to monoubiquitinated STUB1/CHIP, and restriction of the length of ubiquitin chain attached to STUB1/CHIP substrates by ATXN3. After UV irradiation, but not after mitomycin-C (MMC) treatment, acts as a specific E2 ubiquitin-conjugating enzyme for the Fanconi anemia complex by associating with E3 ubiquitin-protein ligase FANCL and catalyzing monoubiquitination of FANCD2, a key step in the DNA damage pathway. In vitro catalyzes 'Lys-11'-linked polyubiquitination. UBE2W-catalyzed ubiquitination also occurs in the presence of inactive RING/U-box type E3s, i.e. lacking the active site cysteine residues to form thioester bonds with ubiquitin, or even in the absence of E3, albeit at a slower rate. This chain is Ubiquitin-conjugating enzyme E2 W (Ube2w), found in Mus musculus (Mouse).